The following is a 654-amino-acid chain: Fructose-1,6-bisphosphatase class 3 (654 aa).

The protein belongs to the FBPase class 3 family. The cofactor is Mn(2+).

The catalysed reaction is beta-D-fructose 1,6-bisphosphate + H2O = beta-D-fructose 6-phosphate + phosphate. Its pathway is carbohydrate biosynthesis; gluconeogenesis. The protein is Fructose-1,6-bisphosphatase class 3 of Staphylococcus epidermidis (strain ATCC 35984 / DSM 28319 / BCRC 17069 / CCUG 31568 / BM 3577 / RP62A).